Reading from the N-terminus, the 356-residue chain is Histidinol-phosphate aminotransferase (356 aa).

The residue at position 210 (lysine 210) is an N6-(pyridoxal phosphate)lysine.

The protein belongs to the class-II pyridoxal-phosphate-dependent aminotransferase family. Histidinol-phosphate aminotransferase subfamily. Homodimer. Pyridoxal 5'-phosphate is required as a cofactor.

The catalysed reaction is L-histidinol phosphate + 2-oxoglutarate = 3-(imidazol-4-yl)-2-oxopropyl phosphate + L-glutamate. It participates in amino-acid biosynthesis; L-histidine biosynthesis; L-histidine from 5-phospho-alpha-D-ribose 1-diphosphate: step 7/9. In Acetobacter pasteurianus (Acetobacter turbidans), this protein is Histidinol-phosphate aminotransferase (hisC).